We begin with the raw amino-acid sequence, 1189 residues long: Increased DNA methylation 1 (1189 aa).

Disordered regions lie at residues 475 to 498 and 523 to 597; these read KNLH…HDSL and SRDE…CRLL. Basic and acidic residues predominate over residues 523–532; it reads SRDERLRNEK. 2 stretches are compositionally biased toward basic residues: residues 541–550 and 565–590; these read KKGRKKARKH and NKGK…KRNN. The PHD-type 1 zinc finger occupies 726–771; sequence DDSCGVCGDGGELICCDNCPSTFHQACLSMQVLPEGSWYCSSCTCW. The PHD-type 2; degenerate zinc-finger motif lies at 767–823; it reads SCTCWICSELVSDNAERSQDFKCSQCAHKYHGTCLQGISKRRKLFPETYFCGKNCEK. The N-acetyltransferase domain maps to 879–1024; sequence MEESFLSMVD…GTTLLKKTLY (146 aa). Residues 1031–1157 are disordered; sequence TMKGVCLSKE…SSSSAALEEV (127 aa). Basic and acidic residues-rich tracts occupy residues 1038–1050, 1102–1114, and 1129–1145; these read SKER…KEAD, NPSR…DRPN, and CLQK…KETT. A compositionally biased stretch (low complexity) spans 1147 to 1157; that stretch reads ASSSSAALEEV.

Interacts (via N-terminus) with IDM2. Interacts with IMD3. Part of a complex made of MBD7, IDM1, IDM2 and IDM3. In terms of tissue distribution, expressed in cotyledons and hypocotyls in young seedlings.

The protein localises to the nucleus. In terms of biological role, histone H3 acetyltransferase that binds methylated DNA at chromatin sites lacking histone H3K4 di- or trimethylation and catalyzes H3K18 and H3K23 acetylation. Prevents the transcriptional silencing of transgenes and of some endogenous genes. Requires the presence of IDM2 for efficient H3K18 acetylation, but not for H3K23 acetylation. In Arabidopsis thaliana (Mouse-ear cress), this protein is Increased DNA methylation 1.